The primary structure comprises 274 residues: Imidazole glycerol phosphate synthase subunit HisF (274 aa).

Residues Asp-11 and Asp-134 contribute to the active site.

Belongs to the HisA/HisF family. As to quaternary structure, heterodimer of HisH and HisF.

The protein resides in the cytoplasm. It catalyses the reaction 5-[(5-phospho-1-deoxy-D-ribulos-1-ylimino)methylamino]-1-(5-phospho-beta-D-ribosyl)imidazole-4-carboxamide + L-glutamine = D-erythro-1-(imidazol-4-yl)glycerol 3-phosphate + 5-amino-1-(5-phospho-beta-D-ribosyl)imidazole-4-carboxamide + L-glutamate + H(+). It functions in the pathway amino-acid biosynthesis; L-histidine biosynthesis; L-histidine from 5-phospho-alpha-D-ribose 1-diphosphate: step 5/9. Functionally, IGPS catalyzes the conversion of PRFAR and glutamine to IGP, AICAR and glutamate. The HisF subunit catalyzes the cyclization activity that produces IGP and AICAR from PRFAR using the ammonia provided by the HisH subunit. The polypeptide is Imidazole glycerol phosphate synthase subunit HisF (Methanobrevibacter smithii (strain ATCC 35061 / DSM 861 / OCM 144 / PS)).